The primary structure comprises 310 residues: Oxygen-dependent coproporphyrinogen-III oxidase (310 aa).

Serine 97 provides a ligand contact to substrate. A divalent metal cation-binding residues include histidine 101 and histidine 111. Histidine 111 (proton donor) is an active-site residue. 113–115 (NFR) is a binding site for substrate. The a divalent metal cation site is built by histidine 150 and histidine 180. The important for dimerization stretch occupies residues 245–280 (YVEFNLLYDRGTRFGLEFGGRTESILMSLPPRVVWR). A substrate-binding site is contributed by 263–265 (GGR).

The protein belongs to the aerobic coproporphyrinogen-III oxidase family. Homodimer. It depends on a divalent metal cation as a cofactor.

Its subcellular location is the cytoplasm. The enzyme catalyses coproporphyrinogen III + O2 + 2 H(+) = protoporphyrinogen IX + 2 CO2 + 2 H2O. The protein operates within porphyrin-containing compound metabolism; protoporphyrin-IX biosynthesis; protoporphyrinogen-IX from coproporphyrinogen-III (O2 route): step 1/1. In terms of biological role, involved in the heme biosynthesis. Catalyzes the aerobic oxidative decarboxylation of propionate groups of rings A and B of coproporphyrinogen-III to yield the vinyl groups in protoporphyrinogen-IX. The sequence is that of Oxygen-dependent coproporphyrinogen-III oxidase from Coxiella burnetii (strain Dugway 5J108-111).